The chain runs to 369 residues: MNFKVRVIDLAGSCCRLGALQFGTKVVETPGCLIYNRSGVVPHLTPDILETLDNVPPIMHTPLASIIEEPGLIKLRGYGKGLASFIGYKDNSVYISASDYQGEAMYQYNENKSISVWTKTGRTKVTPDDYSKFVEVCRPSWYQSLCDTVPANASIKRTRKSVDRTLEFLDQCLKYREKHDSLKTSELWAAVEGGGLVDERQRSAKESATRPVFGFTLEGFGSDQMNVETIFELLPLTTQNLPVEKPRLIHAIGSPTINSLSRSSKLTEVEEENGNDSSNDQDRTATFSLLNLREDRYNEDFSPLVSGCKCFVCSNHTRAYIHHLIINNEMLGGVLLMTHNLFQYIEFFRCIRTSLKNNKWKELRKLFDA.

Positions 263 to 282 (SSKLTEVEEENGNDSSNDQD) are disordered. Zn(2+)-binding residues include Cys-308, Cys-310, Cys-313, and His-339.

This sequence belongs to the queuine tRNA-ribosyltransferase family. QTRT2 subfamily. Heterodimer of a catalytic subunit and an accessory subunit. The cofactor is Zn(2+).

Its subcellular location is the cytoplasm. Functionally, non-catalytic subunit of the queuine tRNA-ribosyltransferase (TGT) that catalyzes the base-exchange of a guanine (G) residue with queuine (Q) at position 34 (anticodon wobble position) in tRNAs with GU(N) anticodons (tRNA-Asp, -Asn, -His and -Tyr), resulting in the hypermodified nucleoside queuosine (7-(((4,5-cis-dihydroxy-2-cyclopenten-1-yl)amino)methyl)-7-deazaguanosine). In Trichoplax adhaerens (Trichoplax reptans), this protein is Queuine tRNA-ribosyltransferase accessory subunit 2.